The sequence spans 1722 residues: MGTRRVTPGCAAGLLVLLLRCFGLAEPSEFSGDDSFTIVNENTGKCIQPLSDWIVAQDCSETRSMLWKWVSQHRLFHLESQKCLGLDMTKAADNLRMFRCDSSVLLWWKCEHHSLYSAAHYRLDLKDGYATASTNSSAVWKKGGSKENLCDQPYREIYTRDGNSYGRPCEFPFLVGETWHHDCIRDENHSGPWCATTLNYEYDQKWGICLKPESGCEGNWEKNEQIGSCYQFNNQEVLSWKEAYVSCQNQGADLLSIHSAAELAYITGKEDIARIVWIGLNQLYSARGWEWSDFKPLKFLNWDPGTPSAPMIGGSSCARMDTETGLWRSVSCEAQQPYVCKKPLNNTVELPDVWTYSDTHCDVGWLPQNGFCYLLANESGPWDAAHLKCKAFGGDLISIHSLADVEVVVTKLHSGDVKEEIWTGLRNVNSPTLFQWSDGTEVTLTYWNENEPSVPYNKTPNCVSYLGKLGQWKVQSCEKKLRYVCKKKGEITNDTRSDKLCPPDEGWKRHGETCYKIYENEVPFGTNCNLTITSRFEQEFLNDMMKKYDKSFQKYFWTGLRDADARGEYSWAATGGLKQAMTFSNWNFLQPASPGGCVAMSTGKTLGRWEVKSCRSFRALSICKKMSGPQEPEEATPKPDEPCPEGWHTFPSNLSCYKVFHIERTVRRRTWEEAERFCQALGAHLPSFSHMNEVKEFLHLLQDQFSVQRWLWIGLNKRSPDLQGSWQWSDRTPVSTVIMHREFQQDYDVRDCAAIKVLDNAWLRTWYYYDERKFGYLKPFSCDAKLDWVCQIPKGSTLQVPDWYNPERTGIHGPPVIIDGSEYWFVEEPRLNYEEAVLYCASNHSFLATITTFTKLKAIRGKMENLSGEEQKWWVKANANPIDHYFLRTRPLWHRFSMLLDEECLQMSAKMWHLDLNKRADCNDKLPFVCEKYNVSSLEKYSPDSAAKVQCTGKWIPFQNKCFLKVKSEPVTFSQASSTCHTYGGTLPSVLSKSEQDFIISLLPEMETSLWIGLRWTAYDRISKWTDGRNLTYSNFHPLLVGRRLSIAAYFIDEESHYHCALMLNLRKSPLTGTWNFTSCSERHSLSLCQKYSENEDGRPWETNSETVKYLNNLYKIISKPLTWHGALKECLNENMRLVSITDPYQQAFLSVQATLRNTSFWIGLSSQDDELNFGWSDGTYLHFSNWAVDNEKLDDCVILDTDGFWKTADCDENQPGAICYYPGNETSKEVRPLNSAKCPSPAQSTPWVPFQNSCYNFMITKNRHRTITQKEVHSLCQKLHSKAQILSIRNEEENNFVVEQLLYFNYIASWVMLGVTYENNSLMWFDKTALSYTHWRAGRPAVKNHKFLAGLSTDGFWDIQSFNVIDETLHFYQHSILACKIEMVDYKEERNSTLPEFIPYEDGVYNVIQKRVTWYQALSMCSQSGRHLASVHNPKEQLFLEDIVNRDGFPLWVGLSSHDGSESSFEWSDGSAFDYIPWKSQGSPGNCVILDPKGTWKHENCLSVKDGAICYKPTKFKELASHAHSSKCPLVKRNGSQWVQYGDHCYSAEQALHTFAEAKKLCQELDHSATVVTIADENENKFVSRLMRENYNITMRVWLGLSQHSLDQSWSWLDGLDVTFVKWENKSKNGDGKCSILIASNETWKKVECSRGYARVVCKVPLSPDYRGIAVLFAVLSVLALISGLIWFLVQRNHFRWTGLSSVRYEHGANEDEVMLPSFHD.

The N-terminal stretch at 1–27 (MGTRRVTPGCAAGLLVLLLRCFGLAEP) is a signal peptide. The Extracellular segment spans residues 28–1666 (SEFSGDDSFT…VVCKVPLSPD (1639 aa)). Residues 32 to 182 (GDDSFTIVNE…FLVGETWHHD (151 aa)) enclose the Ricin B-type lectin domain. Asparagine 135 carries N-linked (GlcNAc...) asparagine glycosylation. A Fibronectin type-II domain is found at 164-211 (SYGRPCEFPFLVGETWHHDCIRDENHSGPWCATTLNYEYDQKWGICLK). Intrachain disulfides connect cysteine 169/cysteine 194, cysteine 183/cysteine 209, cysteine 247/cysteine 340, and cysteine 317/cysteine 332. The region spanning 225 to 341 (QIGSCYQFNN…CEAQQPYVCK (117 aa)) is the C-type lectin 1 domain. 2 N-linked (GlcNAc...) asparagine glycosylation sites follow: asparagine 345 and asparagine 377. C-type lectin domains follow at residues 368–486 (QNGF…YVCK), 493–625 (NDTR…ICKK), and 652–791 (SNLS…WVCQ). 2 disulfides stabilise this stretch: cysteine 389–cysteine 485 and cysteine 462–cysteine 477. Asparagine 529 carries N-linked (GlcNAc...) asparagine glycosylation. 3 cysteine pairs are disulfide-bonded: cysteine 597/cysteine 614, cysteine 678/cysteine 790, and cysteine 752/cysteine 782. 2 N-linked (GlcNAc...) asparagine glycosylation sites follow: asparagine 843 and asparagine 865. A Phosphotyrosine modification is found at tyrosine 933. Asparagine 934 and asparagine 1076 each carry an N-linked (GlcNAc...) asparagine glycan. C-type lectin domains follow at residues 958–1091 (FQNK…LCQK) and 1110–1222 (YLNN…ICYY). 2 cysteine pairs are disulfide-bonded: cysteine 1060-cysteine 1080 and cysteine 1197-cysteine 1211. N-linked (GlcNAc...) asparagine glycans are attached at residues asparagine 1225, asparagine 1320, and asparagine 1392. Residues 1251-1374 (FQNSCYNFMI…VIDETLHFYQ (124 aa)) form the C-type lectin 7 domain. 2 consecutive C-type lectin domains span residues 1401-1513 (YEDG…ICYK) and 1542-1661 (YGDH…VCKV). Cysteine 1488 and cysteine 1502 are disulfide-bonded. Residues asparagine 1593 and asparagine 1626 are each glycosylated (N-linked (GlcNAc...) asparagine). Cysteine 1635 and cysteine 1650 form a disulfide bridge. A helical transmembrane segment spans residues 1667–1691 (YRGIAVLFAVLSVLALISGLIWFLV). The Cytoplasmic portion of the chain corresponds to 1692–1722 (QRNHFRWTGLSSVRYEHGANEDEVMLPSFHD). 2 positions are modified to phosphoserine: serine 1703 and serine 1719.

In terms of tissue distribution, expressed in the thymus and cultured bone marrow cells.

It localises to the membrane. Functionally, acts as an endocytic receptor to direct captured antigens from the extracellular space to a specialized antigen-processing compartment. Causes reduced proliferation of B lymphocytes. This is Lymphocyte antigen 75 (LY75) from Mesocricetus auratus (Golden hamster).